Here is a 403-residue protein sequence, read N- to C-terminus: Phosphopentomutase (403 aa).

The Mn(2+) site is built by D13, D298, H303, D339, H340, and H351.

The protein belongs to the phosphopentomutase family. Mn(2+) serves as cofactor.

It is found in the cytoplasm. The catalysed reaction is 2-deoxy-alpha-D-ribose 1-phosphate = 2-deoxy-D-ribose 5-phosphate. It carries out the reaction alpha-D-ribose 1-phosphate = D-ribose 5-phosphate. It participates in carbohydrate degradation; 2-deoxy-D-ribose 1-phosphate degradation; D-glyceraldehyde 3-phosphate and acetaldehyde from 2-deoxy-alpha-D-ribose 1-phosphate: step 1/2. Isomerase that catalyzes the conversion of deoxy-ribose 1-phosphate (dRib-1-P) and ribose 1-phosphate (Rib-1-P) to deoxy-ribose 5-phosphate (dRib-5-P) and ribose 5-phosphate (Rib-5-P), respectively. The sequence is that of Phosphopentomutase from Streptococcus pneumoniae serotype 2 (strain D39 / NCTC 7466).